The primary structure comprises 161 residues: Nucleotide-binding protein Gura_0717 (161 aa).

It belongs to the YajQ family.

Its function is as follows. Nucleotide-binding protein. This Geotalea uraniireducens (strain Rf4) (Geobacter uraniireducens) protein is Nucleotide-binding protein Gura_0717.